Consider the following 702-residue polypeptide: Neurochondrin (702 aa).

It belongs to the neurochondrin family.

The protein resides in the cytoplasm. It localises to the cytosol. It is found in the cell projection. Its subcellular location is the dendrite. The protein localises to the postsynapse. Its function is as follows. Probably involved in signal transduction, in the nervous system. Required for the spatial learning process. May also be involved in neurite outgrowth. The protein is Neurochondrin (NCDN) of Gallus gallus (Chicken).